Reading from the N-terminus, the 407-residue chain is ATP-citrate synthase subunit alpha chain protein 1 (407 aa).

The citrate site is built by Asn-327, Thr-329, and Arg-360.

This sequence belongs to the succinate/malate CoA ligase beta subunit family. As to quaternary structure, heterooctamer of 4 alpha and 4 beta chains.

It localises to the cytoplasm. The protein localises to the cytosol. It catalyses the reaction oxaloacetate + acetyl-CoA + ADP + phosphate = citrate + ATP + CoA. Functionally, ATP citrate-lyase is the primary enzyme responsible for the synthesis of cytosolic acetyl-CoA, used for the elongation of fatty acids and biosynthesis of isoprenoids, flavonoids and malonated derivatives. May supply substrate to the cytosolic acetyl-CoA carboxylase, which generates the malonyl-CoA used for the synthesis of a multitude of compounds, including very long chain fatty acids and flavonoids. In contrast to all known animal ACL enzymes having a homomeric structure, plant ACLs are composed of alpha and beta chains. The sequence is that of ATP-citrate synthase subunit alpha chain protein 1 (ACLA-1) from Oryza sativa subsp. japonica (Rice).